The chain runs to 171 residues: Peptide deformylase (171 aa).

2 residues coordinate Fe cation: Cys-87 and His-129. Glu-130 is an active-site residue. Residue His-133 coordinates Fe cation.

The protein belongs to the polypeptide deformylase family. It depends on Fe(2+) as a cofactor.

It carries out the reaction N-terminal N-formyl-L-methionyl-[peptide] + H2O = N-terminal L-methionyl-[peptide] + formate. Removes the formyl group from the N-terminal Met of newly synthesized proteins. Requires at least a dipeptide for an efficient rate of reaction. N-terminal L-methionine is a prerequisite for activity but the enzyme has broad specificity at other positions. The polypeptide is Peptide deformylase (Pseudothermotoga lettingae (strain ATCC BAA-301 / DSM 14385 / NBRC 107922 / TMO) (Thermotoga lettingae)).